We begin with the raw amino-acid sequence, 271 residues long: Plasmanylethanolamine desaturase 1 (271 aa).

The segment at 1–25 is disordered; sequence MAGAEDAPGRQPELDEDETAEGRRW. Transmembrane regions (helical) follow at residues 48–68, 75–95, and 166–186; these read WCSVILCFSLIAHNLVHLLLL, PLVILGVVAGALVADFLSGLV, and LYPWECFVFCLTIFGTFTNQI. A Histidine box-1 motif is present at residues 187–191; the sequence is HKWSH. The Histidine box-2 motif lies at 214–218; it reads HHRIH.

This sequence belongs to the fatty acid desaturase CarF family.

The protein resides in the endoplasmic reticulum membrane. The enzyme catalyses a 1-(1,2-saturated alkyl)-2-acyl-sn-glycero-3-phosphoethanolamine + 2 Fe(II)-[cytochrome b5] + O2 + 2 H(+) = a 1-O-(1Z-alkenyl)-2-acyl-sn-glycero-3-phosphoethanolamine + 2 Fe(III)-[cytochrome b5] + 2 H2O. It catalyses the reaction a 1-O-hexadecyl-2-acyl-sn-glycero-3-phosphoethanolamine + 2 Fe(II)-[cytochrome b5] + O2 + 2 H(+) = a 1-O-(1Z-hexadecenyl)-2-acyl-sn-glycero-3-phosphoethanolamine + 2 Fe(III)-[cytochrome b5] + 2 H2O. The catalysed reaction is a 1-O-octadecyl-2-acyl-sn-glycero-3-phosphoethanolamine + 2 Fe(II)-[cytochrome b5] + O2 + 2 H(+) = a 1-O-(1Z-octadecenyl)-2-acyl-sn-glycero-3-phosphoethanolamine + 2 Fe(III)-[cytochrome b5] + 2 H2O. It carries out the reaction a 1-O-(9Z-octadecenyl)-2-acyl-sn-glycero-3-phosphoethanolamine + 2 Fe(II)-[cytochrome b5] + O2 + 2 H(+) = a 1-O-(1Z,9Z-octadecadienyl)-2-acyl-sn-glycero-3-phosphoethanolamine + 2 Fe(III)-[cytochrome b5] + 2 H2O. Its pathway is lipid metabolism; fatty acid metabolism. Plasmanylethanolamine desaturase involved in plasmalogen biogenesis in the endoplasmic reticulum membrane. Plasmalogens are glycerophospholipids with a hydrocarbon chain linked by a vinyl ether bond at the glycerol sn-1 position, and are involved in antioxidative and signaling mechanisms. The sequence is that of Plasmanylethanolamine desaturase 1 from Mus musculus (Mouse).